The sequence spans 492 residues: Probable cobyric acid synthase (492 aa).

The region spanning 248-434 (PVRIAVVRLP…MHGLFQNPGA (187 aa)) is the GATase cobBQ-type domain. Cysteine 327 (nucleophile) is an active-site residue. The active site involves histidine 426.

Belongs to the CobB/CobQ family. CobQ subfamily.

Its pathway is cofactor biosynthesis; adenosylcobalamin biosynthesis. In terms of biological role, catalyzes amidations at positions B, D, E, and G on adenosylcobyrinic A,C-diamide. NH(2) groups are provided by glutamine, and one molecule of ATP is hydrogenolyzed for each amidation. The sequence is that of Probable cobyric acid synthase from Methanoculleus marisnigri (strain ATCC 35101 / DSM 1498 / JR1).